We begin with the raw amino-acid sequence, 381 residues long: Alkanesulfonate monooxygenase (381 aa).

Belongs to the SsuD family. In terms of assembly, homotetramer.

It catalyses the reaction an alkanesulfonate + FMNH2 + O2 = an aldehyde + FMN + sulfite + H2O + 2 H(+). Catalyzes the desulfonation of aliphatic sulfonates. The sequence is that of Alkanesulfonate monooxygenase from Escherichia coli O157:H7.